Here is a 973-residue protein sequence, read N- to C-terminus: Microtubule-associated protein 1S (973 aa).

A necessary for the microtubule-organizing center localization region spans residues 1–716; that stretch reads MAAVMAAPEA…SESLPTLSDS (716 aa). Disordered regions lie at residues 452–538 and 560–853; these read HDLE…GPRA and LESE…SGRP. The span at 459 to 468 shows a compositional bias: polar residues; sequence RANSQDSLAS. Position 462 is a phosphoserine (Ser-462). Residues 490–506 show a composition bias toward basic and acidic residues; the sequence is VRREPALATRDQKKDTR. Residues 565–582 show a composition bias toward pro residues; the sequence is PPAPSPTLSPAQSPPPTA. Residues Ser-586, Ser-591, and Ser-593 each carry the phosphoserine modification. A necessary for interaction with RASSF1 region spans residues 601 to 973; it reads PDASPSATTP…EAFPACKVEF (373 aa). A compositionally biased stretch (low complexity) spans 603–621; it reads ASPSATTPTLTTPSLPAEL. The necessary for association with microtubules stretch occupies residues 645–880; the sequence is DPGLSLPLRL…GGGAGHLDQN (236 aa). A phosphoserine mark is found at Ser-660 and Ser-684. Over residues 703-722 the composition is skewed to low complexity; the sequence is PTSVSESLPTLSDSDPVPVA. The residue at position 724 (Ser-724) is a Phosphoserine. Residues 736–749 show a composition bias toward pro residues; the sequence is DPPPTPRVPPPLPD. Residues 782-801 show a composition bias toward low complexity; sequence ARPSSASATPRAATVAAKTK. The interval 875-973 is necessary for association with actin; that stretch reads GHLDQNFFLR…EAFPACKVEF (99 aa). The interval 881–905 is necessary for the mitochondrial aggregation and genome destruction; sequence FFLRVRALCYVISGQGQRQEEGLRA.

It belongs to the MAP1 family. In terms of assembly, heterodimer of a heavy and a light chain. Interacts with microtubules and actin. Both MAP1S heavy and light chains interact with microtubules. MAP1S light chain interacts with actin. Interacts with ESR1, LRPPRC, RASSF1, microtubules and VCY2. Interacts with WDR47 (via N-terminus of light chain). Interacts (via C-terminus) with GAN (via Kelch domains). In terms of tissue distribution, expressed in ventral and dorsal horns of the spinal cord, hippocampus, cerebral cortex, molecular, Purkinje and granular cell layers of the cerebellum and in dorsal root ganglia of the PNS (at protein level). Expressed in brain, testis, heart, lung, kidney and liver.

It is found in the nucleus. Its subcellular location is the cytoplasm. The protein localises to the cytosol. The protein resides in the cytoskeleton. It localises to the spindle. Its function is as follows. Microtubule-associated protein that mediates aggregation of mitochondria resulting in cell death and genomic destruction (MAGD). Plays a role in anchoring the microtubule organizing center to the centrosomes. Binds to DNA. Plays a role in apoptosis. Involved in the formation of microtubule bundles. This Mus musculus (Mouse) protein is Microtubule-associated protein 1S (Map1s).